The primary structure comprises 293 residues: 4-hydroxy-tetrahydrodipicolinate synthase (293 aa).

Position 47 (Thr-47) interacts with pyruvate. Tyr-136 (proton donor/acceptor) is an active-site residue. Lys-164 functions as the Schiff-base intermediate with substrate in the catalytic mechanism. Ile-206 is a pyruvate binding site.

It belongs to the DapA family. In terms of assembly, homotetramer; dimer of dimers.

It is found in the cytoplasm. The catalysed reaction is L-aspartate 4-semialdehyde + pyruvate = (2S,4S)-4-hydroxy-2,3,4,5-tetrahydrodipicolinate + H2O + H(+). The protein operates within amino-acid biosynthesis; L-lysine biosynthesis via DAP pathway; (S)-tetrahydrodipicolinate from L-aspartate: step 3/4. In terms of biological role, catalyzes the condensation of (S)-aspartate-beta-semialdehyde [(S)-ASA] and pyruvate to 4-hydroxy-tetrahydrodipicolinate (HTPA). In Listeria monocytogenes serotype 4a (strain HCC23), this protein is 4-hydroxy-tetrahydrodipicolinate synthase.